Here is a 333-residue protein sequence, read N- to C-terminus: Glycerol-3-phosphate dehydrogenase [NAD(P)+] (333 aa).

NADPH-binding residues include tryptophan 12, histidine 31, and lysine 105. 3 residues coordinate sn-glycerol 3-phosphate: lysine 105, glycine 134, and serine 136. Alanine 138 is an NADPH binding site. Lysine 189, aspartate 242, serine 252, arginine 253, and asparagine 254 together coordinate sn-glycerol 3-phosphate. The active-site Proton acceptor is the lysine 189. Residue arginine 253 coordinates NADPH. Residues valine 278 and glutamate 280 each coordinate NADPH.

Belongs to the NAD-dependent glycerol-3-phosphate dehydrogenase family.

The protein localises to the cytoplasm. The catalysed reaction is sn-glycerol 3-phosphate + NAD(+) = dihydroxyacetone phosphate + NADH + H(+). The enzyme catalyses sn-glycerol 3-phosphate + NADP(+) = dihydroxyacetone phosphate + NADPH + H(+). Its pathway is membrane lipid metabolism; glycerophospholipid metabolism. Functionally, catalyzes the reduction of the glycolytic intermediate dihydroxyacetone phosphate (DHAP) to sn-glycerol 3-phosphate (G3P), the key precursor for phospholipid synthesis. The chain is Glycerol-3-phosphate dehydrogenase [NAD(P)+] from Brachyspira hyodysenteriae (strain ATCC 49526 / WA1).